The sequence spans 491 residues: Protein nucleotidyltransferase YdiU (491 aa).

Residues Gly92, Gly94, Arg95, Lys115, Asp127, Gly128, Arg178, and Arg185 each coordinate ATP. The Proton acceptor role is filled by Asp254. Positions 255 and 264 each coordinate Mg(2+). Position 264 (Asp264) interacts with ATP.

The protein belongs to the SELO family. It depends on Mg(2+) as a cofactor. Mn(2+) is required as a cofactor.

It carries out the reaction L-seryl-[protein] + ATP = 3-O-(5'-adenylyl)-L-seryl-[protein] + diphosphate. The enzyme catalyses L-threonyl-[protein] + ATP = 3-O-(5'-adenylyl)-L-threonyl-[protein] + diphosphate. It catalyses the reaction L-tyrosyl-[protein] + ATP = O-(5'-adenylyl)-L-tyrosyl-[protein] + diphosphate. The catalysed reaction is L-histidyl-[protein] + UTP = N(tele)-(5'-uridylyl)-L-histidyl-[protein] + diphosphate. It carries out the reaction L-seryl-[protein] + UTP = O-(5'-uridylyl)-L-seryl-[protein] + diphosphate. The enzyme catalyses L-tyrosyl-[protein] + UTP = O-(5'-uridylyl)-L-tyrosyl-[protein] + diphosphate. Nucleotidyltransferase involved in the post-translational modification of proteins. It can catalyze the addition of adenosine monophosphate (AMP) or uridine monophosphate (UMP) to a protein, resulting in modifications known as AMPylation and UMPylation. This Pseudarthrobacter chlorophenolicus (strain ATCC 700700 / DSM 12829 / CIP 107037 / JCM 12360 / KCTC 9906 / NCIMB 13794 / A6) (Arthrobacter chlorophenolicus) protein is Protein nucleotidyltransferase YdiU.